The following is an 891-amino-acid chain: Tubulin polyglutamylase TTLL6 (891 aa).

Disordered regions lie at residues 1 to 25 (MGALLLHPSRRGPAGVVASWTSSPA) and 44 to 106 (SQAR…KRKK). The segment covering 63–76 (SEEKGDSSKEDPKE) has biased composition (basic and acidic residues). Residues 88–99 (GAQNGLQNAQQQ) show a composition bias toward low complexity. The TTL domain occupies 106-449 (KKRLVINLSS…ESCDKKKVLE (344 aa)). ATP-binding positions include lysine 223, 229–230 (QG), 251–254 (QLYI), and 264–266 (KFD). Glutamine 229 serves as a coordination point for a protein. Arginine 290 serves as a coordination point for L-glutamate. 312–313 (TN) is an ATP binding site. L-glutamate-binding residues include tyrosine 314, serine 315, and lysine 332. Mg(2+)-binding residues include aspartate 395, glutamate 408, and asparagine 410. Histidine 411 is a binding site for a protein. Positions 420-499 (RLDKEVKDGL…CGGFRLIYPS (80 aa)) are c-MTBD region. An L-glutamate-binding site is contributed by lysine 426. Disordered stretches follow at residues 546–584 (QMKKKVEMQGESAGEQVRKKGMRGWQQKQQQKDKAATQA), 607–636 (GERKNETDSSLNQEAPTEEASSVFPKLTSA), 687–711 (TTPESTTQLSISPKSPPTLAVTASS), and 800–820 (NNLSQNPSLPGECHSRSDSSG). The span at 687-699 (TTPESTTQLSISP) shows a compositional bias: polar residues.

Belongs to the tubulin--tyrosine ligase family. In terms of assembly, found in a complex with CEP41. Requires Mg(2+) as cofactor.

The protein resides in the cytoplasm. It localises to the cytoskeleton. Its subcellular location is the cilium axoneme. It is found in the cilium basal body. The catalysed reaction is L-glutamyl-[protein] + L-glutamate + ATP = gamma-L-glutamyl-L-glutamyl-[protein] + ADP + phosphate + H(+). The enzyme catalyses (L-glutamyl)(n)-gamma-L-glutamyl-L-glutamyl-[protein] + L-glutamate + ATP = (L-glutamyl)(n+1)-gamma-L-glutamyl-L-glutamyl-[protein] + ADP + phosphate + H(+). Polyglutamylase which modifies both tubulin and non-tubulin proteins, generating alpha-linked polyglutamate side chains on the gamma-carboxyl group of specific glutamate residues of target proteins. Preferentially mediates ATP-dependent long polyglutamate chain elongation over the initiation step of the polyglutamylation reaction. Preferentially modifies the alpha-tubulin tail over a beta-tail. Promotes tubulin polyglutamylation which stimulates spastin/SPAST-mediated microtubule severing, thereby regulating microtubule functions. Mediates microtubule polyglutamylation in primary cilia axoneme, which is important for ciliary structural formation and motility. Mediates microtubule polyglutamylation in motile cilia, necessary for the regulation of ciliary coordinated beating. Polyglutamylates non-tubulin protein nucleotidyltransferase CGAS, leading to CGAS DNA-binding inhibition, thereby preventing antiviral defense response. The protein is Tubulin polyglutamylase TTLL6 of Homo sapiens (Human).